The chain runs to 403 residues: Coiled-coil domain-containing glutamate-rich protein 1 (403 aa).

Residues 1–11 show a composition bias toward basic and acidic residues; that stretch reads MTQTVNEREDP. 5 disordered regions span residues 1-23, 51-70, 134-164, 202-241, and 261-350; these read MTQTVNEREDPLNLGGGGWASSI, IEYEASRKQPKQQRSPGSWF, RPPGRKKRWGRRGRGLRRHPRRSFPRNPPID, QQEKLERQQAALRAQQAQEGGISPGDSTTNDAPHSGVEED, and PALM…GEQR. Over residues 137–157 the composition is skewed to basic residues; it reads GRKKRWGRRGRGLRRHPRRSF. The segment covering 209-220 has biased composition (low complexity); the sequence is QQAALRAQQAQE. Polar residues predominate over residues 261 to 271; sequence PALMQHNQSPT. The segment covering 275-346 has biased composition (acidic residues); the sequence is VEEEEKNVDD…YMLEETGLEE (72 aa). The stretch at 292 to 353 forms a coiled coil; it reads CDEKEESEEE…LEEGEQRAEE (62 aa).

In terms of tissue distribution, expressed in testis.

It is found in the nucleus. Its function is as follows. Regulator of histone epigenetic modifications and chromatin compaction into the sperm head, required for histone-to-protamine (HTP) transition. HTP is a key event in which somatic histones are first replaced by testis-specific histone variants, then transition proteins (TNPs) are incorporated into the spermatid nucleus, and finally protamines (PRMs) replace the TNPs to promote chromatin condensation. This is Coiled-coil domain-containing glutamate-rich protein 1 (Ccer1) from Mus musculus (Mouse).